The primary structure comprises 364 residues: tRNA 2-selenouridine synthase (364 aa).

The Rhodanese domain maps to 14–137; it reads LLADTPLIDV…LRQTAIQATW (124 aa). Cys97 functions as the S-selanylcysteine intermediate in the catalytic mechanism.

It belongs to the SelU family. As to quaternary structure, monomer.

It catalyses the reaction 5-methylaminomethyl-2-thiouridine(34) in tRNA + selenophosphate + (2E)-geranyl diphosphate + H2O + H(+) = 5-methylaminomethyl-2-selenouridine(34) in tRNA + (2E)-thiogeraniol + phosphate + diphosphate. It carries out the reaction 5-methylaminomethyl-2-thiouridine(34) in tRNA + (2E)-geranyl diphosphate = 5-methylaminomethyl-S-(2E)-geranyl-thiouridine(34) in tRNA + diphosphate. The catalysed reaction is 5-methylaminomethyl-S-(2E)-geranyl-thiouridine(34) in tRNA + selenophosphate + H(+) = 5-methylaminomethyl-2-(Se-phospho)selenouridine(34) in tRNA + (2E)-thiogeraniol. The enzyme catalyses 5-methylaminomethyl-2-(Se-phospho)selenouridine(34) in tRNA + H2O = 5-methylaminomethyl-2-selenouridine(34) in tRNA + phosphate. Its function is as follows. Involved in the post-transcriptional modification of the uridine at the wobble position (U34) of tRNA(Lys), tRNA(Glu) and tRNA(Gln). Catalyzes the conversion of 2-thiouridine (S2U-RNA) to 2-selenouridine (Se2U-RNA). Acts in a two-step process involving geranylation of 2-thiouridine (S2U) to S-geranyl-2-thiouridine (geS2U) and subsequent selenation of the latter derivative to 2-selenouridine (Se2U) in the tRNA chain. This chain is tRNA 2-selenouridine synthase, found in Salmonella choleraesuis (strain SC-B67).